The following is a 339-amino-acid chain: Putative P2Y purinoceptor 10 (339 aa).

Residues 1-39 (MANLDKYTETFKMGSNSTSTAEIYCNVTNVKFQYSLYAT) lie on the Extracellular side of the membrane. 2 N-linked (GlcNAc...) asparagine glycosylation sites follow: asparagine 16 and asparagine 26. Residues 40–60 (TYILIFIPGLLANSAALWVLC) form a helical membrane-spanning segment. At 61–68 (RFISKKNK) the chain is on the cytoplasmic side. A helical transmembrane segment spans residues 69–89 (AIIFMINLSVADLAHVLSLPL). At 90–103 (RIYYYISHHWPFQR) the chain is on the extracellular side. A helical membrane pass occupies residues 104–124 (ALCLLCFYLKYLNMYASICFL). A disulfide bond links cysteine 106 and cysteine 181. Topologically, residues 125-149 (TCISLQRCFFLLKPFRARDWKRRYD) are cytoplasmic. A helical transmembrane segment spans residues 150–170 (VGISAAIWIVVGTACLPFPIL). At 171–193 (RSTDLNNNKSCFADLGYKQMNAV) the chain is on the extracellular side. N-linked (GlcNAc...) asparagine glycosylation is present at asparagine 178. A helical membrane pass occupies residues 194–214 (ALVGMITVAELAGFVIPVIII). Over 215-244 (AWCTWKTTISLRQPPMAFQGISERQKALRM) the chain is Cytoplasmic. Residues 245 to 265 (VFMCAAVFFICFTPYHINFIF) form a helical membrane-spanning segment. Over 266-288 (YTMVKETIISSCPVVRIALYFHP) the chain is Extracellular. Residues 289-309 (FCLCLASLCCLLDPILYYFMA) form a helical membrane-spanning segment. Over 310–339 (SEFRDQLSRHGSSVTRSRLMSKESGSSMIG) the chain is Cytoplasmic.

It belongs to the G-protein coupled receptor 1 family. As to expression, weakly expressed in blood leukocytes.

It localises to the cell membrane. Functionally, putative receptor for purines coupled to G-proteins. This is Putative P2Y purinoceptor 10 (P2RY10) from Homo sapiens (Human).